A 395-amino-acid chain; its full sequence is Putative 8-amino-7-oxononanoate synthase (395 aa).

Arg-23 serves as a coordination point for substrate. Gly-110–Tyr-111 contributes to the pyridoxal 5'-phosphate binding site. His-135 contributes to the substrate binding site. Residues Ser-182, Asp-207–His-210, and Thr-239–Lys-242 contribute to the pyridoxal 5'-phosphate site. Residue Lys-242 is modified to N6-(pyridoxal phosphate)lysine. Residue Thr-356 participates in substrate binding.

The protein belongs to the class-II pyridoxal-phosphate-dependent aminotransferase family. BioF subfamily. Homodimer. The cofactor is pyridoxal 5'-phosphate.

The catalysed reaction is 6-carboxyhexanoyl-[ACP] + L-alanine + H(+) = (8S)-8-amino-7-oxononanoate + holo-[ACP] + CO2. The protein operates within cofactor biosynthesis; biotin biosynthesis. Catalyzes the decarboxylative condensation of pimeloyl-[acyl-carrier protein] and L-alanine to produce 8-amino-7-oxononanoate (AON), [acyl-carrier protein], and carbon dioxide. This chain is Putative 8-amino-7-oxononanoate synthase (bioF), found in Bacillus cereus (strain B4264).